The following is a 113-amino-acid chain: Large ribosomal subunit protein bL19 (113 aa).

Belongs to the bacterial ribosomal protein bL19 family.

Its function is as follows. This protein is located at the 30S-50S ribosomal subunit interface and may play a role in the structure and function of the aminoacyl-tRNA binding site. The chain is Large ribosomal subunit protein bL19 from Nocardia farcinica (strain IFM 10152).